Consider the following 90-residue polypeptide: Caspase recruitment domain-containing protein 18 (90 aa).

The 90-residue stretch at 1–90 (MADQLLRKKR…PQLASKMGLH (90 aa)) folds into the CARD domain.

In terms of assembly, interacts with pro-CASP1. Interacts with CARD8. In terms of tissue distribution, primarily expressed in the heart and placenta.

Inhibits generation of IL-1-beta by interacting with caspase-1 and preventing its association with RIP2. Down-regulates the release of IL1B. The protein is Caspase recruitment domain-containing protein 18 (CARD18) of Homo sapiens (Human).